The following is a 194-amino-acid chain: Imidazoleglycerol-phosphate dehydratase (194 aa).

This sequence belongs to the imidazoleglycerol-phosphate dehydratase family.

It is found in the cytoplasm. It catalyses the reaction D-erythro-1-(imidazol-4-yl)glycerol 3-phosphate = 3-(imidazol-4-yl)-2-oxopropyl phosphate + H2O. The protein operates within amino-acid biosynthesis; L-histidine biosynthesis; L-histidine from 5-phospho-alpha-D-ribose 1-diphosphate: step 6/9. This is Imidazoleglycerol-phosphate dehydratase from Chlorobaculum tepidum (strain ATCC 49652 / DSM 12025 / NBRC 103806 / TLS) (Chlorobium tepidum).